The primary structure comprises 128 residues: Cytochrome c' (128 aa).

Heme c-binding residues include glutamine 13, glutamine 17, glutamate 69, threonine 70, cysteine 118, cysteine 121, and histidine 122.

Binds 1 heme c group covalently per subunit.

Cytochrome c' is the most widely occurring bacterial c-type cytochrome. Cytochromes c' are high-spin proteins and the heme has no sixth ligand. Their exact function is not known. This Magnetospirillum fulvum (Rhodospirillum fulvum) protein is Cytochrome c'.